Here is a 757-residue protein sequence, read N- to C-terminus: Exo-alpha-(1-&gt;6)-L-arabinopyranosidase (757 aa).

Aspartate 232 is an active-site residue.

This sequence belongs to the glycosyl hydrolase 3 family. Homotetramer.

With respect to regulation, completely inhibited by Cu(2+) and activated by Co(2+). Catalyzes the hydrolysis of a non-reducing terminal alpha-L-arabinopyranosidic linkage in ginsenoside Rb2 (alpha-L-arabinopyranosyl-(1-&gt;6)-alpha-D-glucopyranosyl) to release alpha-D-glucopyranosyl (Rd). It is not able to hydrolyze alpha-L-arabinofuranosyl-(1-&gt;6)-alpha-D-glucopyranosyl (Rc). This chain is Exo-alpha-(1-&gt;6)-L-arabinopyranosidase (apy), found in Bifidobacterium longum.